Here is a 145-residue protein sequence, read N- to C-terminus: D-aminoacyl-tRNA deacylase (145 aa).

Residues G137 to P138 carry the Gly-cisPro motif, important for rejection of L-amino acids motif.

This sequence belongs to the DTD family. As to quaternary structure, homodimer.

It is found in the cytoplasm. It catalyses the reaction glycyl-tRNA(Ala) + H2O = tRNA(Ala) + glycine + H(+). The catalysed reaction is a D-aminoacyl-tRNA + H2O = a tRNA + a D-alpha-amino acid + H(+). Its function is as follows. An aminoacyl-tRNA editing enzyme that deacylates mischarged D-aminoacyl-tRNAs. Also deacylates mischarged glycyl-tRNA(Ala), protecting cells against glycine mischarging by AlaRS. Acts via tRNA-based rather than protein-based catalysis; rejects L-amino acids rather than detecting D-amino acids in the active site. By recycling D-aminoacyl-tRNA to D-amino acids and free tRNA molecules, this enzyme counteracts the toxicity associated with the formation of D-aminoacyl-tRNA entities in vivo and helps enforce protein L-homochirality. This Saccharophagus degradans (strain 2-40 / ATCC 43961 / DSM 17024) protein is D-aminoacyl-tRNA deacylase.